A 319-amino-acid chain; its full sequence is Protein sprouty homolog 1 (319 aa).

An N-acetylmethionine modification is found at M1. Positions 54–157 (TEGPSVVKRP…HRSERAIRTQ (104 aa)) are disordered. The segment covering 69–79 (PRQEKHERTHE) has biased composition (basic and acidic residues). Over residues 112-131 (SRSTSTGSAASSGSNSSASS) the composition is skewed to low complexity. The SPR domain occupies 183-295 (QCGKCKCGEC…CYDWIHRPGC (113 aa)).

This sequence belongs to the sprouty family. Forms heterodimers with SPRY2. Interacts with TESK1. Interacts with CAV1 (via C-terminus).

Its subcellular location is the cytoplasm. It localises to the membrane. Its function is as follows. Inhibits fibroblast growth factor (FGF)-induced retinal lens fiber differentiation, probably by inhibiting FGF-mediated phosphorylation of ERK1/2. Inhibits TGFB-induced epithelial-to-mesenchymal transition in lens epithelial cells. The sequence is that of Protein sprouty homolog 1 (SPRY1) from Bos taurus (Bovine).